The sequence spans 205 residues: Holliday junction branch migration complex subunit RuvA (205 aa).

The interval 1 to 64 (MIGRLRGTLA…EDAHLLYGFA (64 aa)) is domain I. A domain II region spans residues 65–143 (EKRERELFRE…AWETSPAMFT (79 aa)). Residues 144–154 (LVSDGPLPVAS) are flexible linker. Positions 154-205 (SESSAEADAVSALVSLGYKPQEASKAIAAIKDKAGLSSEELIRRSLKGMISK) are domain III.

It belongs to the RuvA family. As to quaternary structure, homotetramer. Forms an RuvA(8)-RuvB(12)-Holliday junction (HJ) complex. HJ DNA is sandwiched between 2 RuvA tetramers; dsDNA enters through RuvA and exits via RuvB. An RuvB hexamer assembles on each DNA strand where it exits the tetramer. Each RuvB hexamer is contacted by two RuvA subunits (via domain III) on 2 adjacent RuvB subunits; this complex drives branch migration. In the full resolvosome a probable DNA-RuvA(4)-RuvB(12)-RuvC(2) complex forms which resolves the HJ.

The protein resides in the cytoplasm. Its function is as follows. The RuvA-RuvB-RuvC complex processes Holliday junction (HJ) DNA during genetic recombination and DNA repair, while the RuvA-RuvB complex plays an important role in the rescue of blocked DNA replication forks via replication fork reversal (RFR). RuvA specifically binds to HJ cruciform DNA, conferring on it an open structure. The RuvB hexamer acts as an ATP-dependent pump, pulling dsDNA into and through the RuvAB complex. HJ branch migration allows RuvC to scan DNA until it finds its consensus sequence, where it cleaves and resolves the cruciform DNA. In Pseudomonas putida (strain ATCC 47054 / DSM 6125 / CFBP 8728 / NCIMB 11950 / KT2440), this protein is Holliday junction branch migration complex subunit RuvA.